The sequence spans 334 residues: Beta-hexosaminidase (334 aa).

Substrate-binding positions include aspartate 60, arginine 68, arginine 133, and 163-164 (KH). Histidine 176 acts as the Proton donor/acceptor in catalysis. The Nucleophile role is filled by aspartate 247.

This sequence belongs to the glycosyl hydrolase 3 family. NagZ subfamily.

The protein resides in the cytoplasm. The catalysed reaction is Hydrolysis of terminal non-reducing N-acetyl-D-hexosamine residues in N-acetyl-beta-D-hexosaminides.. Its pathway is cell wall biogenesis; peptidoglycan recycling. In terms of biological role, plays a role in peptidoglycan recycling by cleaving the terminal beta-1,4-linked N-acetylglucosamine (GlcNAc) from peptide-linked peptidoglycan fragments, giving rise to free GlcNAc, anhydro-N-acetylmuramic acid and anhydro-N-acetylmuramic acid-linked peptides. The sequence is that of Beta-hexosaminidase from Xanthomonas euvesicatoria pv. vesicatoria (strain 85-10) (Xanthomonas campestris pv. vesicatoria).